The following is a 69-amino-acid chain: Large ribosomal subunit protein bL31 (69 aa).

Positions 16, 18, 37, and 40 each coordinate Zn(2+).

This sequence belongs to the bacterial ribosomal protein bL31 family. Type A subfamily. Part of the 50S ribosomal subunit. Zn(2+) is required as a cofactor.

Binds the 23S rRNA. This is Large ribosomal subunit protein bL31 from Syntrophotalea carbinolica (strain DSM 2380 / NBRC 103641 / GraBd1) (Pelobacter carbinolicus).